Here is a 602-residue protein sequence, read N- to C-terminus: Glutamine--fructose-6-phosphate aminotransferase [isomerizing] (602 aa).

The active-site Nucleophile; for GATase activity is Cys-2. The 218-residue stretch at 2–219 folds into the Glutamine amidotransferase type-2 domain; sequence CGIIGYIGDR…DGEYAILTKD (218 aa). SIS domains follow at residues 280 to 420 and 453 to 592; these read VAEE…VLGT and LAET…PDKP. Lys-597 acts as the For Fru-6P isomerization activity in catalysis.

As to quaternary structure, homodimer.

The protein resides in the cytoplasm. The enzyme catalyses D-fructose 6-phosphate + L-glutamine = D-glucosamine 6-phosphate + L-glutamate. Its function is as follows. Catalyzes the first step in hexosamine metabolism, converting fructose-6P into glucosamine-6P using glutamine as a nitrogen source. This Thermococcus kodakarensis (strain ATCC BAA-918 / JCM 12380 / KOD1) (Pyrococcus kodakaraensis (strain KOD1)) protein is Glutamine--fructose-6-phosphate aminotransferase [isomerizing].